A 154-amino-acid polypeptide reads, in one-letter code: Transcriptional repressor NrdR (154 aa).

The segment at 3–34 is a zinc-finger region; sequence CPFCSAHDTKVIDSRLVAEGDQVRRRRECQAC. An ATP-cone domain is found at 49–139; it reads PRVIKQDGSR…VYRRFQDLNE (91 aa).

Belongs to the NrdR family. Requires Zn(2+) as cofactor.

In terms of biological role, negatively regulates transcription of bacterial ribonucleotide reductase nrd genes and operons by binding to NrdR-boxes. This is Transcriptional repressor NrdR from Azotobacter vinelandii (strain DJ / ATCC BAA-1303).